Consider the following 505-residue polypeptide: Flagellin (505 aa).

The protein belongs to the bacterial flagellin family.

It is found in the secreted. The protein resides in the bacterial flagellum. In terms of biological role, flagellin is the subunit protein which polymerizes to form the filaments of bacterial flagella. This Salmonella budapest protein is Flagellin (fliC).